We begin with the raw amino-acid sequence, 341 residues long: 3-dehydroquinate synthase (341 aa).

Residues 54 to 59 (DGEKYK), 88 to 92 (GVVTD), 112 to 113 (TT), Lys-125, Lys-133, and 151 to 154 (TLST) each bind NAD(+). Positions 166, 220, and 236 each coordinate Zn(2+).

Belongs to the sugar phosphate cyclases superfamily. Dehydroquinate synthase family. NAD(+) serves as cofactor. Requires Co(2+) as cofactor. It depends on Zn(2+) as a cofactor.

The protein localises to the cytoplasm. The catalysed reaction is 7-phospho-2-dehydro-3-deoxy-D-arabino-heptonate = 3-dehydroquinate + phosphate. Its pathway is metabolic intermediate biosynthesis; chorismate biosynthesis; chorismate from D-erythrose 4-phosphate and phosphoenolpyruvate: step 2/7. Functionally, catalyzes the conversion of 3-deoxy-D-arabino-heptulosonate 7-phosphate (DAHP) to dehydroquinate (DHQ). The chain is 3-dehydroquinate synthase from Thermococcus kodakarensis (strain ATCC BAA-918 / JCM 12380 / KOD1) (Pyrococcus kodakaraensis (strain KOD1)).